The chain runs to 538 residues: Putative cysteine ligase BshC (538 aa).

Residues Leu454–Tyr482 are a coiled coil.

Belongs to the BshC family.

Functionally, involved in bacillithiol (BSH) biosynthesis. May catalyze the last step of the pathway, the addition of cysteine to glucosamine malate (GlcN-Mal) to generate BSH. The sequence is that of Putative cysteine ligase BshC from Bacillus licheniformis (strain ATCC 14580 / DSM 13 / JCM 2505 / CCUG 7422 / NBRC 12200 / NCIMB 9375 / NCTC 10341 / NRRL NRS-1264 / Gibson 46).